Here is a 102-residue protein sequence, read N- to C-terminus: Small ribosomal subunit protein uS10 (102 aa).

It belongs to the universal ribosomal protein uS10 family. As to quaternary structure, part of the 30S ribosomal subunit.

In terms of biological role, involved in the binding of tRNA to the ribosomes. The polypeptide is Small ribosomal subunit protein uS10 (Symbiobacterium thermophilum (strain DSM 24528 / JCM 14929 / IAM 14863 / T)).